We begin with the raw amino-acid sequence, 135 residues long: Large ribosomal subunit protein uL16c (135 aa).

A compositionally biased stretch (basic residues) spans 1-17; that stretch reads MLSPKRTKFRKQHRNRM. The tract at residues 1–22 is disordered; the sequence is MLSPKRTKFRKQHRNRMNGKAS.

Belongs to the universal ribosomal protein uL16 family. In terms of assembly, part of the 50S ribosomal subunit.

It is found in the plastid. Its subcellular location is the chloroplast. The sequence is that of Large ribosomal subunit protein uL16c from Gracilaria tenuistipitata (Red alga).